The following is a 145-amino-acid chain: Transcription antitermination protein NusB (145 aa).

The protein belongs to the NusB family.

Involved in transcription antitermination. Required for transcription of ribosomal RNA (rRNA) genes. Binds specifically to the boxA antiterminator sequence of the ribosomal RNA (rrn) operons. The protein is Transcription antitermination protein NusB of Thiobacillus denitrificans (strain ATCC 25259 / T1).